The following is a 216-amino-acid chain: [5-(aminomethyl)furan-3-yl]methyl phosphate kinase (216 aa).

ATP is bound by residues 5–9 (KIGGS), Gly-39, Asp-142, 147–152 (YDKFPG), and Gly-166.

This sequence belongs to the MfnE family. Homotrimer. The cofactor is Mg(2+).

It catalyses the reaction [5-(aminomethyl)-3-furyl]methyl phosphate + ATP = [5-(aminomethyl)furan-3-yl]methyl diphosphate + ADP. Its pathway is cofactor biosynthesis; methanofuran biosynthesis. Inhibited by EDTA. Catalyzes the formation of 5-(aminomethyl)-3-furanmethanol diphosphate (F1-PP) from 5-(aminomethyl)-3-furanmethanol phosphate (F1-P) and ATP. In vitro, can also act as an adenylate kinase that catalyzes the transfer of a phosphoryl group from ATP to AMP, generating two molecules of ADP. The protein is [5-(aminomethyl)furan-3-yl]methyl phosphate kinase of Methanocaldococcus jannaschii (strain ATCC 43067 / DSM 2661 / JAL-1 / JCM 10045 / NBRC 100440) (Methanococcus jannaschii).